The following is a 477-amino-acid chain: Cysteine--tRNA ligase (477 aa).

Residue Cys-42 participates in Zn(2+) binding. The 'HIGH' region signature appears at 44 to 54 (ATVQGLPHIGH). Positions 220, 245, and 249 each coordinate Zn(2+). The short motif at 276–280 (KMSKS) is the 'KMSKS' region element. Residue Lys-279 coordinates ATP.

The protein belongs to the class-I aminoacyl-tRNA synthetase family. In terms of assembly, monomer. The cofactor is Zn(2+).

The protein localises to the cytoplasm. The catalysed reaction is tRNA(Cys) + L-cysteine + ATP = L-cysteinyl-tRNA(Cys) + AMP + diphosphate. The sequence is that of Cysteine--tRNA ligase from Mycolicibacterium smegmatis (strain ATCC 700084 / mc(2)155) (Mycobacterium smegmatis).